Consider the following 235-residue polypeptide: LexA repressor (235 aa).

Positions 47–67 (IREIADAVGLTSTSSVAHQLR) form a DNA-binding region, H-T-H motif. Catalysis depends on for autocatalytic cleavage activity residues Ser-159 and Lys-196.

This sequence belongs to the peptidase S24 family. As to quaternary structure, homodimer.

The catalysed reaction is Hydrolysis of Ala-|-Gly bond in repressor LexA.. In terms of biological role, represses a number of genes involved in the response to DNA damage (SOS response), including recA and lexA. In the presence of single-stranded DNA, RecA interacts with LexA causing an autocatalytic cleavage which disrupts the DNA-binding part of LexA, leading to derepression of the SOS regulon and eventually DNA repair. This is LexA repressor from Mycobacterium leprae (strain Br4923).